The chain runs to 480 residues: Phenylalanine--tRNA ligase alpha subunit (480 aa).

Thr-324 and Phe-407 together coordinate L-phenylalanine. Glu-409 contacts Mg(2+). Phe-432 serves as a coordination point for L-phenylalanine.

It belongs to the class-II aminoacyl-tRNA synthetase family. Phe-tRNA synthetase alpha subunit type 2 subfamily. Tetramer of two alpha and two beta subunits. Mg(2+) is required as a cofactor.

Its subcellular location is the cytoplasm. It carries out the reaction tRNA(Phe) + L-phenylalanine + ATP = L-phenylalanyl-tRNA(Phe) + AMP + diphosphate + H(+). The sequence is that of Phenylalanine--tRNA ligase alpha subunit from Methanocaldococcus jannaschii (strain ATCC 43067 / DSM 2661 / JAL-1 / JCM 10045 / NBRC 100440) (Methanococcus jannaschii).